The chain runs to 213 residues: Probable chemoreceptor glutamine deamidase CheD (213 aa).

Basic residues predominate over residues 1 to 12 (MNRHRPHSHRSK). The tract at residues 1-25 (MNRHRPHSHRSKPASTQDQPDSVRR) is disordered.

The protein belongs to the CheD family.

It carries out the reaction L-glutaminyl-[protein] + H2O = L-glutamyl-[protein] + NH4(+). Probably deamidates glutamine residues to glutamate on methyl-accepting chemotaxis receptors (MCPs), playing an important role in chemotaxis. This Rhodopseudomonas palustris (strain BisA53) protein is Probable chemoreceptor glutamine deamidase CheD.